We begin with the raw amino-acid sequence, 60 residues long: Large ribosomal subunit protein bL32 (60 aa).

Residues 1 to 60 (MAVQQNKKSPSKRGMHRSHDFLVNPPTAIEPTTGESHLRHHISPNGFYRGRKILKTKADE) are disordered. A compositionally biased stretch (basic residues) spans 49–60 (RGRKILKTKADE).

Belongs to the bacterial ribosomal protein bL32 family.

The sequence is that of Large ribosomal subunit protein bL32 from Bordetella avium (strain 197N).